We begin with the raw amino-acid sequence, 393 residues long: Acetate kinase (393 aa).

Residue Asn7 participates in Mg(2+) binding. Lys14 provides a ligand contact to ATP. Position 87 (Arg87) interacts with substrate. Residue Asp144 is the Proton donor/acceptor of the active site. Residues 202-206 (HIGNG), 277-279 (DLR), and 326-330 (GVGEN) contribute to the ATP site. Mg(2+) is bound at residue Glu380.

This sequence belongs to the acetokinase family. In terms of assembly, homodimer. It depends on Mg(2+) as a cofactor. Mn(2+) serves as cofactor.

It localises to the cytoplasm. It catalyses the reaction acetate + ATP = acetyl phosphate + ADP. The protein operates within metabolic intermediate biosynthesis; acetyl-CoA biosynthesis; acetyl-CoA from acetate: step 1/2. Functionally, catalyzes the formation of acetyl phosphate from acetate and ATP. Can also catalyze the reverse reaction. The sequence is that of Acetate kinase from Mycoplasmopsis pulmonis (strain UAB CTIP) (Mycoplasma pulmonis).